We begin with the raw amino-acid sequence, 284 residues long: 2-dehydro-3-deoxyphosphooctonate aldolase (284 aa).

It belongs to the KdsA family.

The protein localises to the cytoplasm. It carries out the reaction D-arabinose 5-phosphate + phosphoenolpyruvate + H2O = 3-deoxy-alpha-D-manno-2-octulosonate-8-phosphate + phosphate. The protein operates within carbohydrate biosynthesis; 3-deoxy-D-manno-octulosonate biosynthesis; 3-deoxy-D-manno-octulosonate from D-ribulose 5-phosphate: step 2/3. It participates in bacterial outer membrane biogenesis; lipopolysaccharide biosynthesis. The polypeptide is 2-dehydro-3-deoxyphosphooctonate aldolase (Escherichia fergusonii (strain ATCC 35469 / DSM 13698 / CCUG 18766 / IAM 14443 / JCM 21226 / LMG 7866 / NBRC 102419 / NCTC 12128 / CDC 0568-73)).